We begin with the raw amino-acid sequence, 401 residues long: Acetate kinase (401 aa).

Mg(2+) is bound at residue asparagine 7. Lysine 14 is a binding site for ATP. Arginine 91 is a binding site for substrate. Aspartate 148 acts as the Proton donor/acceptor in catalysis. ATP is bound by residues 208–212, 283–285, and 331–335; these read HLGNG, DFR, and GVGEN. Glutamate 384 contacts Mg(2+).

This sequence belongs to the acetokinase family. Homodimer. The cofactor is Mg(2+). Requires Mn(2+) as cofactor.

It localises to the cytoplasm. It carries out the reaction acetate + ATP = acetyl phosphate + ADP. The protein operates within metabolic intermediate biosynthesis; acetyl-CoA biosynthesis; acetyl-CoA from acetate: step 1/2. In terms of biological role, catalyzes the formation of acetyl phosphate from acetate and ATP. Can also catalyze the reverse reaction. The protein is Acetate kinase of Helicobacter hepaticus (strain ATCC 51449 / 3B1).